Here is a 500-residue protein sequence, read N- to C-terminus: LEM protein 2 (500 aa).

Residues 1–45 enclose the LEM domain; it reads MVDVEKMSDAELRAELNVRGANVGPVTGTTRSLYEKKLKKLLSGG. Residues 1–325 lie on the Nuclear side of the membrane; it reads MVDVEKMSDA…VKQTNIFNEA (325 aa). Residues 39-202 form a disordered region; the sequence is KKLLSGGAKT…RRITSVPGLI (164 aa). Low complexity predominate over residues 46–57; sequence AKTPARPTVAKP. Over residues 58–75 the composition is skewed to pro residues; that stretch reads APKPTPKSAPAPKSPKSP. Residues 77-89 are compositionally biased toward low complexity; that stretch reads ARRSIPRAAATAA. The span at 103–122 shows a compositional bias: acidic residues; it reads EEMSDSDDDMRDDDDDDEEI. Composition is skewed to low complexity over residues 130-141 and 168-197; these read SSFRSANSTASS and NTPR…RITS. The chain crosses the membrane as a helical span at residues 326–346; sequence IYFALYVILILFVVLGIAYAL. At 347 to 378 the chain is on the perinuclear space side; sequence TTTHRPKTADFSGYWGVLKAAGRDSLNFFYNY. Residues 379 to 399 traverse the membrane as a helical segment; that stretch reads AILPVVSLGIFVVLGAGIYFG. Residues 400-500 are Nuclear-facing; it reads HRKYKEAKEQ…WIGNQSQKRW (101 aa).

In terms of assembly, interacts with lmn-1. Interacts (via LEM domain and the C-terminal nuclear domain) with baf-1. In terms of tissue distribution, ubiquitous. High expression in germline and intestine.

Its subcellular location is the nucleus inner membrane. It localises to the nucleus envelope. The protein resides in the chromosome. In terms of biological role, nuclear lamina-associated inner nuclear membrane protein that is involved in cell division, nuclear structure organization, maintenance of nuclear envelope integrity and nuclear envelope reformation after mitosis. In interphase cells, plays a role in anchoring and spatial arrangement of chromosome arms at the nuclear periphery, forming so-called lem-2 subdomains. Both arms of autosomes but only the left arm of the X chromosome are anchored in lem-2 subdomains; sequences bound by lem-2 are mainly repetitive chromosome sequences and inactive genes. Involved in chromosome segregation and cell division, probably via its interaction with the nuclear intermediate filament protein lmn-1, the main component of nuclear lamina. Required to organize the distribution of lmn-1, nuclear pore complexes (NPCs) and chromatin in mitotically active cells. Involved in the nuclear positioning and efficient anchoring of microtubule-organizing centers (MTOCs) to the nuclear envelope during mitosis as well as on maintaining correct nuclear morphology. Contributes to closure of nuclear envelope (NE) holes and prevents excess nuclear membranes after meiosis and mitosis. Together with emr-1, plays a role in baf-1 enrichment at the nuclear envelope in anaphase. Together with emr-1, involved in muscle cell attachment to hypodermal cells, as well as muscle cell location and sarcomere organization. May play a role in radiation-induced DNA damage repair response. The protein is LEM protein 2 (lem-2) of Caenorhabditis elegans.